The following is a 156-amino-acid chain: 6,7-dimethyl-8-ribityllumazine synthase (156 aa).

5-amino-6-(D-ribitylamino)uracil-binding positions include Phe23, 57 to 59 (AFE), and 81 to 83 (TVI). 86 to 87 (ST) serves as a coordination point for (2S)-2-hydroxy-3-oxobutyl phosphate. His89 acts as the Proton donor in catalysis. Phe114 serves as a coordination point for 5-amino-6-(D-ribitylamino)uracil. Residue Arg128 participates in (2S)-2-hydroxy-3-oxobutyl phosphate binding.

This sequence belongs to the DMRL synthase family. As to quaternary structure, forms an icosahedral capsid composed of 60 subunits, arranged as a dodecamer of pentamers.

The catalysed reaction is (2S)-2-hydroxy-3-oxobutyl phosphate + 5-amino-6-(D-ribitylamino)uracil = 6,7-dimethyl-8-(1-D-ribityl)lumazine + phosphate + 2 H2O + H(+). It participates in cofactor biosynthesis; riboflavin biosynthesis; riboflavin from 2-hydroxy-3-oxobutyl phosphate and 5-amino-6-(D-ribitylamino)uracil: step 1/2. Functionally, catalyzes the formation of 6,7-dimethyl-8-ribityllumazine by condensation of 5-amino-6-(D-ribitylamino)uracil with 3,4-dihydroxy-2-butanone 4-phosphate. This is the penultimate step in the biosynthesis of riboflavin. This is 6,7-dimethyl-8-ribityllumazine synthase from Halalkalibacterium halodurans (strain ATCC BAA-125 / DSM 18197 / FERM 7344 / JCM 9153 / C-125) (Bacillus halodurans).